Consider the following 333-residue polypeptide: Biotin synthase (333 aa).

In terms of domain architecture, Radical SAM core spans 47–276 (YYGKKVKLNM…TKEIRISGGR (230 aa)). Residues cysteine 65, cysteine 69, and cysteine 72 each contribute to the [4Fe-4S] cluster site. [2Fe-2S] cluster is bound by residues cysteine 109, cysteine 141, cysteine 201, and arginine 271.

This sequence belongs to the radical SAM superfamily. Biotin synthase family. In terms of assembly, homodimer. The cofactor is [4Fe-4S] cluster. [2Fe-2S] cluster is required as a cofactor.

It carries out the reaction (4R,5S)-dethiobiotin + (sulfur carrier)-SH + 2 reduced [2Fe-2S]-[ferredoxin] + 2 S-adenosyl-L-methionine = (sulfur carrier)-H + biotin + 2 5'-deoxyadenosine + 2 L-methionine + 2 oxidized [2Fe-2S]-[ferredoxin]. Its pathway is cofactor biosynthesis; biotin biosynthesis; biotin from 7,8-diaminononanoate: step 2/2. Its function is as follows. Catalyzes the conversion of dethiobiotin (DTB) to biotin by the insertion of a sulfur atom into dethiobiotin via a radical-based mechanism. In Bacillus licheniformis (strain ATCC 14580 / DSM 13 / JCM 2505 / CCUG 7422 / NBRC 12200 / NCIMB 9375 / NCTC 10341 / NRRL NRS-1264 / Gibson 46), this protein is Biotin synthase.